A 3072-amino-acid chain; its full sequence is MHHGSGPQNVQHQLQRSRSFTGSEEEQPAHPNLPPSPAAPFAPSASPSAPQSPGYQIQQLMSRSPVAGQNVNITLQNVGPVVGGNQQITLAPLPLPNPTSPGFQFGAQQRRFEHGSPSYIQVTSPMSQQVQTQSPTQPSPGPGQTLQNVRAGAPGPGLGICSNSPTGGFVDASVLVRQISLSPSSGGHFVFQEAPGLTQMAQGAQVQLQHSGAPITVRERRLSQPHAQSGGTIHHLGPQSPAAAGGTGLQPLASPNHITTASLPPQISSIIQGQLIQQQQQVLQGQPMNRSLGFERTPGVLLPGVGGPSAFGMTSPPPPTSPSRTTMPPGLSSVPLTSMGSSGMKKVPKKLEEIPPASQEMAQMRKQCLDYHYKEMEALKEVFKEYLIELFFLQHLQGNMMDFLAFKKKHYAPLQAYLRQNDLDIEEEEEEEEEEEGKSEVINDEVKVVTGKDGQTGTPVAIATQLPPNVSAAFSSQQQPFQHQSLTGSLVVGPGSATEADPFKRQQVMPPTEQSKRPRLEVGHPGVVFQHPGVNAGVPLQQLMPTVQGGMPPTPQATQLTGQKQSQQQYDPSTGPPVQNAASLHTPPPQLPARLPPASVPATALPSTLQFSQQSQMVEASTQLQIPVKTQQLNAPIPAPLPSQLPAPSSQPAQPALHVPMPGKAQMQTSQLSSQTQTVASTRPPLDSAQPCQRSLPTSSSSSSLVPVSGSGPGPSPARSSPVNRPSSATNKALSPITSRSPGVAVSAPPKPQSPAQNAASSQDGSQDKLAEQITLENQIHQRIADLRKEGLWSLRRLPKLQEAPRPKSHWDYLLEEMQWMATDFAQERRWKLAAAKKLVRTVARHHEEKKLREERGKKEEQSRLRRIAATTAREIEYFWSNIEQVVEIKLQVELEEKRKKALNLQKVSRRGKESRLKGFDTSPEHSLDLGISGRKRKASTSLTDDEVEDEEETIEEEEAHEGLVDHHTELTNLAKEAELPLIDLMKLYEGAFLPNFQWPQPEPDHEESSGEEDVEDCPSDRESRRDSVLIDSLFIMDQFKAAERMSIGKSNTKDITEVTAVAEAILPKGSARVTTAVKFSAPSLLYGALRDYQKIGLDWLAKLYRKNLNGILADEAGLGKTVQIIAFFAHLACNEGNWGPHLVVMRSCNILKWELELKRWCPGLKTLSYVGSHRELKAKRQEWTEPNNFHICITSYKQFFRGYTAFSRVHWKCLVVDEMQRVKGMTERHWEAIFKLQSQQRLLLIDVPLHNTFLELWTMVHFLIPGISRPYLSFPLKAPNEENQDYYHKMVIRLHRVTQPFILRRTKRDVEKQLTRKYEHVLKCRLSSRQKALYEDVILQPRTQEALKSGHFVSVLSVLTRLQRICNHPGLVEPRVPGSSFAAGSLQYKSASLILRVLEREFWKETDLSIFDLIGLENKITRHEAELLCKKKVTRKLMEEVFASPPPSARPAAVKLKASRLFQPVQYGQKPEGRTVAFPSTHPPRMANTNTSTATPQGQVRGRPPIATFSANPDTKGGEVVKIAQLASIAGPQSRVAQPETPVTLQFQGNKFTLSHSQLRQLTAGQPLQLQGSVLQIVSAPGQPYLRAPGPVVMQTVSQAGAVHSTLGSKPPTSGPSPAPLTPQVGVPGRVAVSAMAVGEPGLASKPASPAAGPTQEEKSRLLKERLDQIHFINERRCSQAPVYGRDLLRICSLPGRRKRPLCWSLDSNFGKGPKGVNYDMSLSKSEGDLILTLSQESLQDVLGRVACVIPPVVATPPSLWVARPPSLYSSRLRALRQCLREHTGPYHRQLQQLTALRSLQFPELRLVQFDSGKLEALAILLQKLKSEGRRVLILSQMVLMLDILEMFLNFHYLTYVRIDENANSEQRQELMRSFNRDRRIFCALLSTHSRATGINLVEADTVVFYDNDLNPVMDAKAQEWCDRIGRCKDIHIYRLVSGNSIEEKLLKNGTKDLIREVAAQGNDYSMAFLTQRTIQELFEVYSPMDDTGFPVKAEEFVVLSQEPSVSETIAPKIARPFIEALKSIECLEEDAQRSTEEAVPGSSSVAVSSDSDGSRYDEEPSQLEELADFMEQLTPIEKYALNYLELFHTTTEQEKERISEDLVMASMKDWETRNARALQEREARLQLEQEEAELLTYTREDAYTMEYVYEDADGQTEVMPLWTPPTPPQDDNDIYIDSVMCLMYETTPIPEAKLPPVYVRKERKRHKTDPSAAGRKKKQRHGEAVVPPRSLFDRATPGMLKIRREGKEQKKNLLLKQQTPFAKPLPTYVKSSGEPAQDSPDWLIGEDWALLQAVKQLLELPLNLTIVSPAHTPNWDLVSDVVNSCSRIYRSSKQCRNRYENVIIPREEGKSKNNRPLRTSQIYAQDENATHTQLYTSHFELMKMTAGKRSPPIKPLLGMNPFQKNPKHASVLAESGINYDKPLPPIQVASLRAERIAKEKKALADQQKAQQPPVTQPPPQQQQQQQQQQQQQQQQQQPPPPPQQPPPPVPQPQAASSQTPAGQPAVQPQPQPQVQTQPQPVQPQSKGQPTMTTVGSAAVLAGTIKTSVTGTSIPTGTVSGNVIVNTIAGVPAATFQSINKRLASPVAPGTLTTSGGSAPAQVVHTQQRAVGSPATATTDLVSMTTTQGVRAVTSVTASAVVTTNLTPVQTPTRSLVTQVSQATGVQLPGKTITPAAHFQLLRQQQQQQQQQQQQQQTSQVQVPQLQSQAQSPAQIKAVSKLGPEHIIKMQKQKMQLPPQPPPPQAQPGPPQQPAQVQVQTPQPPQQQQSPQLTTVTAPRPGALLTGTTVTNLQVARLTRVPTSQLQAQGQMQTQTPQPAQVALAKPPVVSVPAAVVSSPGVTTLPMNVAGISVAIGQPQKTAGQTVVAQPVNVQQLLKYKQQTAVQQQKAIQPQVAQGQAAVQQKLTTQQITTQGPQQKVAYAAQPALKTQFLTTPISQAQKLAGTQQVQTQIQVAKLPQVVQQQTPVASIQQVASASQQASPQTVTLTQATAAGQQVQMIPTVTATAQLVQQKLIQQQVVTTASASLQTPGGPSPAQLPASSDSPSQQPKLQMRVPAVRLKTPTKPPCQ.

Over residues M1 to G22 the composition is skewed to polar residues. 3 disordered regions span residues M1–Y55, P125–V149, and L222–Q250. Over residues P31–P40 the composition is skewed to pro residues. 2 stretches are compositionally biased toward low complexity: residues F41–P53 and P125–T136. Phosphoserine is present on residues S52 and S134. Residues S315 and S321 each carry the phosphoserine modification. Disordered regions lie at residues S485–R519, M544–P601, and A635–K769. Over residues Q556 to Q569 the composition is skewed to low complexity. A compositionally biased stretch (polar residues) spans Y570–S583. Over residues T586–S599 the composition is skewed to pro residues. Composition is skewed to low complexity over residues P646–L657, Q668–T682, and S695–G710. Polar residues-rich tracts occupy residues N724–S741 and S754–G765. Phosphoserine is present on residues S735, S741, and S754. Positions L798–A870 constitute an HSA domain. Positions E914–L928 are enriched in basic and acidic residues. 2 disordered regions span residues E914 to E952 and F997 to S1024. T922 bears the Phosphothreonine mark. Phosphoserine occurs at positions 923, 927, and 940. Residue T944 is modified to Phosphothreonine. Positions D950–Q1364 are interactions with RUVBL1 and RUVBL2. Phosphoserine occurs at positions 1009 and 1010. The Helicase ATP-binding domain occupies A1102–G1267. D1115–T1122 contributes to the ATP binding site. A DEAD box-like motif is present at residues D1218–Q1221. The residue at position 1471 (K1471) is an N6-acetyllysine. Residues E1473–G1503 are disordered. The span at A1488–G1499 shows a compositional bias: polar residues. 2 positions are modified to phosphoserine: S1646 and S1650. The 158-residue stretch at K1815–T1972 folds into the Helicase C-terminal domain. Disordered regions lie at residues A2033–P2062 and K2203–V2227. A compositionally biased stretch (low complexity) spans G2043–S2053. N6-acetyllysine is present on residues K2265 and K2272. Positions E2276–I2345 constitute a Myb-like domain. The interval K2440–T2699 is interaction with ZNF42. Positions E2441–T2534 are disordered. 2 stretches are compositionally biased toward low complexity: residues A2446–P2455 and Q2463–Q2478. The segment covering Q2479 to Q2493 has biased composition (pro residues). The span at P2494–Q2526 shows a compositional bias: low complexity. S2614 carries the phosphoserine modification. 2 disordered regions span residues Q2734–T2790 and A3028–Q3072. Residues P2739 to Q2754 are compositionally biased toward pro residues. Residues P2755–T2775 show a composition bias toward low complexity. Polar residues predominate over residues P3042–K3053.

It belongs to the SNF2/RAD54 helicase family. SWR1 subfamily. Component of the NuA4 histone acetyltransferase complex which contains the catalytic subunit KAT5/TIP60 and the subunits EP400, TRRAP/PAF400, BRD8/SMAP, EPC1, DMAP1/DNMAP1, RUVBL1/TIP49, RUVBL2, ING3, actin, ACTL6A/BAF53A, MORF4L1/MRG15, MORF4L2/MRGX, MRGBP, YEATS4/GAS41, VPS72/YL1 and MEAF6. May also participate in the formation of NuA4 related complexes which lack the KAT5/TIP60 catalytic subunit, but which include the SWI/SNF related protein SRCAP. The NuA4 complex interacts with MYC. EP400 interacts with TRRAP, RUVBL1 and RUVBL2. Component of a SWR1-like complex. Interacts with ZNF42. Interacts with PHF5A. As to expression, expressed in brain, thymus, lung, liver, spleen, kidney, colon and bone marrow.

It is found in the nucleus. In terms of biological role, component of the NuA4 histone acetyltransferase complex which is involved in transcriptional activation of select genes principally by acetylation of nucleosomal histones H4 and H2A. This modification may both alter nucleosome - DNA interactions and promote interaction of the modified histones with other proteins which positively regulate transcription. May be required for transcriptional activation of E2F1 and MYC target genes during cellular proliferation. The NuA4 complex ATPase and helicase activities seem to be, at least in part, contributed by the association of RUVBL1 and RUVBL2 with EP400. Component of a SWR1-like complex that specifically mediates the removal of histone H2A.Z/H2AZ1 from the nucleosome. Regulates transcriptional activity of ZNF42. This Mus musculus (Mouse) protein is E1A-binding protein p400 (Ep400).